We begin with the raw amino-acid sequence, 223 residues long: Deoxyribose-phosphate aldolase (223 aa).

Asp-89 (proton donor/acceptor) is an active-site residue. Lys-152 serves as the catalytic Schiff-base intermediate with acetaldehyde. The Proton donor/acceptor role is filled by Lys-181.

Belongs to the DeoC/FbaB aldolase family. DeoC type 1 subfamily.

The protein resides in the cytoplasm. The enzyme catalyses 2-deoxy-D-ribose 5-phosphate = D-glyceraldehyde 3-phosphate + acetaldehyde. It functions in the pathway carbohydrate degradation; 2-deoxy-D-ribose 1-phosphate degradation; D-glyceraldehyde 3-phosphate and acetaldehyde from 2-deoxy-alpha-D-ribose 1-phosphate: step 2/2. Catalyzes a reversible aldol reaction between acetaldehyde and D-glyceraldehyde 3-phosphate to generate 2-deoxy-D-ribose 5-phosphate. The sequence is that of Deoxyribose-phosphate aldolase from Bacillus cereus (strain G9842).